A 482-amino-acid chain; its full sequence is UDP-N-acetylmuramate--L-alanine ligase (482 aa).

Residue 129 to 135 (GTHGKTT) coordinates ATP.

This sequence belongs to the MurCDEF family.

The protein localises to the cytoplasm. The catalysed reaction is UDP-N-acetyl-alpha-D-muramate + L-alanine + ATP = UDP-N-acetyl-alpha-D-muramoyl-L-alanine + ADP + phosphate + H(+). It functions in the pathway cell wall biogenesis; peptidoglycan biosynthesis. Cell wall formation. This chain is UDP-N-acetylmuramate--L-alanine ligase, found in Acinetobacter baumannii (strain SDF).